Here is a 241-residue protein sequence, read N- to C-terminus: Glucosamine-6-phosphate deaminase (241 aa).

The active-site Proton acceptor; for enolization step is Asp67. Asn136 (for ring-opening step) is an active-site residue. His138 acts as the Proton acceptor; for ring-opening step in catalysis. The active-site For ring-opening step is the Glu143.

The protein belongs to the glucosamine/galactosamine-6-phosphate isomerase family. NagB subfamily.

The enzyme catalyses alpha-D-glucosamine 6-phosphate + H2O = beta-D-fructose 6-phosphate + NH4(+). Its pathway is amino-sugar metabolism; N-acetylneuraminate degradation; D-fructose 6-phosphate from N-acetylneuraminate: step 5/5. Its function is as follows. Catalyzes the reversible isomerization-deamination of glucosamine 6-phosphate (GlcN6P) to form fructose 6-phosphate (Fru6P) and ammonium ion. This is Glucosamine-6-phosphate deaminase from Bacillus velezensis (strain DSM 23117 / BGSC 10A6 / LMG 26770 / FZB42) (Bacillus amyloliquefaciens subsp. plantarum).